Consider the following 535-residue polypeptide: UDP-N-acetylmuramoyl-L-alanyl-D-glutamate--2,6-diaminopimelate ligase (535 aa).

Leucine 67 contacts UDP-N-acetyl-alpha-D-muramoyl-L-alanyl-D-glutamate. 153–159 (GTSGKTT) serves as a coordination point for ATP. Residues 195–196 (TT), serine 222, and arginine 230 each bind UDP-N-acetyl-alpha-D-muramoyl-L-alanyl-D-glutamate. Lysine 262 is modified (N6-carboxylysine). Residues arginine 424, 448-451 (DNPR), glycine 502, and glutamate 506 contribute to the meso-2,6-diaminopimelate site. The Meso-diaminopimelate recognition motif signature appears at 448-451 (DNPR).

This sequence belongs to the MurCDEF family. MurE subfamily. Mg(2+) is required as a cofactor. In terms of processing, carboxylation is probably crucial for Mg(2+) binding and, consequently, for the gamma-phosphate positioning of ATP.

It localises to the cytoplasm. It catalyses the reaction UDP-N-acetyl-alpha-D-muramoyl-L-alanyl-D-glutamate + meso-2,6-diaminopimelate + ATP = UDP-N-acetyl-alpha-D-muramoyl-L-alanyl-gamma-D-glutamyl-meso-2,6-diaminopimelate + ADP + phosphate + H(+). The protein operates within cell wall biogenesis; peptidoglycan biosynthesis. Functionally, catalyzes the addition of meso-diaminopimelic acid to the nucleotide precursor UDP-N-acetylmuramoyl-L-alanyl-D-glutamate (UMAG) in the biosynthesis of bacterial cell-wall peptidoglycan. The protein is UDP-N-acetylmuramoyl-L-alanyl-D-glutamate--2,6-diaminopimelate ligase of Mycobacterium bovis (strain ATCC BAA-935 / AF2122/97).